We begin with the raw amino-acid sequence, 160 residues long: UPF0262 protein Mrad2831_3513 (160 aa).

This sequence belongs to the UPF0262 family.

This is UPF0262 protein Mrad2831_3513 from Methylobacterium radiotolerans (strain ATCC 27329 / DSM 1819 / JCM 2831 / NBRC 15690 / NCIMB 10815 / 0-1).